Reading from the N-terminus, the 569-residue chain is Aspartokinase 1, chloroplastic (569 aa).

A chloroplast-targeting transit peptide spans 1-90 (MAATRVRCCH…VDEKGITCVM (90 aa)). 3 residues coordinate ATP: lysine 91, glycine 94, and serine 123. Glutamate 207 is a substrate binding site. ACT domains lie at 405–483 (IAST…AIIS) and 484–560 (LIGN…GNGS). L-lysine-binding residues include glutamine 413 and glycine 415. Residue serine 430 coordinates S-adenosyl-L-methionine. L-lysine contacts are provided by valine 431, aspartate 432, and serine 437. Residues serine 452 and arginine 453 each contribute to the S-adenosyl-L-methionine site.

This sequence belongs to the aspartokinase family. As to quaternary structure, homodimer.

Its subcellular location is the plastid. It localises to the chloroplast. The catalysed reaction is L-aspartate + ATP = 4-phospho-L-aspartate + ADP. It participates in amino-acid biosynthesis; L-lysine biosynthesis via DAP pathway; (S)-tetrahydrodipicolinate from L-aspartate: step 1/4. It functions in the pathway amino-acid biosynthesis; L-methionine biosynthesis via de novo pathway; L-homoserine from L-aspartate: step 1/3. The protein operates within amino-acid biosynthesis; L-threonine biosynthesis; L-threonine from L-aspartate: step 1/5. With respect to regulation, inhibited by S-adenosyl-L-methionine (SAM) and lysine in a synergistic manner. No inhibition by threonine, leucine or SAM alone, and no activation or inhibition by alanine, cysteine, isoleucine, serine, valine, methionine, glutamine, asparagine, glutamic acid or arginine. In terms of biological role, involved in the first step of essential amino acids lysine, threonine, methionine and isoleucine synthesis via the aspartate-family pathway. This Arabidopsis thaliana (Mouse-ear cress) protein is Aspartokinase 1, chloroplastic (AK1).